The primary structure comprises 149 residues: Large ribosomal subunit protein bL9 (149 aa).

Belongs to the bacterial ribosomal protein bL9 family.

In terms of biological role, binds to the 23S rRNA. This chain is Large ribosomal subunit protein bL9, found in Citrobacter koseri (strain ATCC BAA-895 / CDC 4225-83 / SGSC4696).